The following is a 131-amino-acid chain: Fumarate reductase subunit C (131 aa).

A run of 3 helical transmembrane segments spans residues 30–50 (EGTC…VFAL), 58–78 (AGFV…VTLI), and 109–129 (IVRG…AVAL).

Belongs to the FrdC family. In terms of assembly, part of an enzyme complex containing four subunits: a flavoprotein (FrdA), an iron-sulfur protein (FrdB), and two hydrophobic anchor proteins (FrdC and FrdD).

Its subcellular location is the cell inner membrane. Its function is as follows. Two distinct, membrane-bound, FAD-containing enzymes are responsible for the catalysis of fumarate and succinate interconversion; fumarate reductase is used in anaerobic growth, and succinate dehydrogenase is used in aerobic growth. Anchors the catalytic components of the fumarate reductase complex to the cell inner membrane, binds quinones. This chain is Fumarate reductase subunit C, found in Proteus vulgaris.